The following is a 134-amino-acid chain: Phosphomevalonate dehydratase small subunit (134 aa).

The active-site Proton acceptor is the Ser-62.

Belongs to the AcnX type II small subunit family. Heterodimer composed of a large subunit (PMDh-L) and a small subunit (PMDh-S).

The enzyme catalyses (R)-5-phosphomevalonate = (2E)-3-methyl-5-phosphooxypent-2-enoate + H2O. It participates in isoprenoid biosynthesis; isopentenyl diphosphate biosynthesis via mevalonate pathway. Functionally, component of a hydro-lyase that catalyzes the dehydration of mevalonate 5-phosphate (MVA5P) to form trans-anhydromevalonate 5-phosphate (tAHMP). Involved in the archaeal mevalonate (MVA) pathway, which provides fundamental precursors for isoprenoid biosynthesis, such as isopentenyl diphosphate (IPP) and dimethylallyl diphosphate (DMAPP). The chain is Phosphomevalonate dehydratase small subunit from Pyrococcus horikoshii (strain ATCC 700860 / DSM 12428 / JCM 9974 / NBRC 100139 / OT-3).